The sequence spans 940 residues: UvrABC system protein A (940 aa).

31-38 serves as a coordination point for ATP; sequence GLSGSGKS. A C4-type zinc finger spans residues 252-279; sequence CPQCGYSMQELEPRLFSFNNPAGACGTC. 2 ABC transporter domains span residues 309–586 and 606–936; these read WDQK…PNSL and RDPK…RFLK. 639 to 646 provides a ligand contact to ATP; sequence GVSGSGKS. The segment at 739 to 765 adopts a C4-type zinc-finger fold; the sequence is CEACQGDGVIKVEMHFLPDVYVPCDVC.

This sequence belongs to the ABC transporter superfamily. UvrA family. Forms a heterotetramer with UvrB during the search for lesions.

The protein resides in the cytoplasm. In terms of biological role, the UvrABC repair system catalyzes the recognition and processing of DNA lesions. UvrA is an ATPase and a DNA-binding protein. A damage recognition complex composed of 2 UvrA and 2 UvrB subunits scans DNA for abnormalities. When the presence of a lesion has been verified by UvrB, the UvrA molecules dissociate. This is UvrABC system protein A from Vibrio parahaemolyticus serotype O3:K6 (strain RIMD 2210633).